A 390-amino-acid polypeptide reads, in one-letter code: GTPase Obg (390 aa).

Residues 1 to 159 (MKFVDEAVVK…REIRLELLLL (159 aa)) enclose the Obg domain. The 174-residue stretch at 160 to 333 (ADVGMLGLPN…LCYKLADFME (174 aa)) folds into the OBG-type G domain. GTP is bound by residues 166–173 (GLPNAGKS), 191–195 (FTTLI), 213–216 (DIPG), 283–286 (NKVD), and 314–316 (SAI). Mg(2+) contacts are provided by Ser-173 and Thr-193. Acidic residues predominate over residues 367–382 (TEDDDDWDDWDDEEDD). Residues 367-390 (TEDDDDWDDWDDEEDDGHVVYVRD) are disordered.

Belongs to the TRAFAC class OBG-HflX-like GTPase superfamily. OBG GTPase family. As to quaternary structure, monomer. The cofactor is Mg(2+).

It localises to the cytoplasm. Functionally, an essential GTPase which binds GTP, GDP and possibly (p)ppGpp with moderate affinity, with high nucleotide exchange rates and a fairly low GTP hydrolysis rate. Plays a role in control of the cell cycle, stress response, ribosome biogenesis and in those bacteria that undergo differentiation, in morphogenesis control. This is GTPase Obg from Vibrio parahaemolyticus serotype O3:K6 (strain RIMD 2210633).